The chain runs to 292 residues: MSENRPEPVAAETSAATTARHSQADAGAHDAVRRGRHELPADHPRSKVGPLRRTRLTEILRGGRSRLVFGTLAILLCLVLGVAIVTQVRQTDSGDSLETARPADLLVLLDSLRQREATLNAEVIDLQNTLNALQASGNTDQAALESAQARLAALSILVGAVGATGPGVMITIDDPGPGVAPEVMIDVINELRAAGAEAIQINDAHRSVRVGVDTWVVGVPGSLTVDTKVLSPPYSILAIGDPPTLAAAMNIPGGAQDGVKRVGGRMVVQQADRVDVTALRQPKQHQYAQPVK.

The N-terminal stretch at 1 to 28 (MSENRPEPVAAETSAATTARHSQADAGA) is a signal peptide. Positions 1–30 (MSENRPEPVAAETSAATTARHSQADAGAHD) are disordered. Transmembrane regions (helical) follow at residues 68-88 (VFGT…VTQV), 152-172 (AALS…MITI), and 229-249 (VLSP…AAAM).

This sequence belongs to the UPF0749 family.

It localises to the cell membrane. The polypeptide is UPF0749 protein Mb1856 (Mycobacterium bovis (strain ATCC BAA-935 / AF2122/97)).